The primary structure comprises 361 residues: Phosphoserine aminotransferase (361 aa).

R42 contacts L-glutamate. Pyridoxal 5'-phosphate is bound by residues 76–77 (AR), W102, T153, D173, and Q196. K197 is modified (N6-(pyridoxal phosphate)lysine). 238–239 (NT) is a binding site for pyridoxal 5'-phosphate.

It belongs to the class-V pyridoxal-phosphate-dependent aminotransferase family. SerC subfamily. As to quaternary structure, homodimer. Requires pyridoxal 5'-phosphate as cofactor.

Its subcellular location is the cytoplasm. The catalysed reaction is O-phospho-L-serine + 2-oxoglutarate = 3-phosphooxypyruvate + L-glutamate. It catalyses the reaction 4-(phosphooxy)-L-threonine + 2-oxoglutarate = (R)-3-hydroxy-2-oxo-4-phosphooxybutanoate + L-glutamate. The protein operates within amino-acid biosynthesis; L-serine biosynthesis; L-serine from 3-phospho-D-glycerate: step 2/3. It functions in the pathway cofactor biosynthesis; pyridoxine 5'-phosphate biosynthesis; pyridoxine 5'-phosphate from D-erythrose 4-phosphate: step 3/5. In terms of biological role, catalyzes the reversible conversion of 3-phosphohydroxypyruvate to phosphoserine and of 3-hydroxy-2-oxo-4-phosphonooxybutanoate to phosphohydroxythreonine. This Yersinia pseudotuberculosis serotype IB (strain PB1/+) protein is Phosphoserine aminotransferase.